A 204-amino-acid chain; its full sequence is HTH-type transcriptional repressor KstR (204 aa).

The HTH tetR-type domain occupies 18–78; the sequence is RERRKRILDA…SALGREFERI (61 aa). Residues 41-60 constitute a DNA-binding region (H-T-H motif); the sequence is QMRAVAERADVAVGTLYRYF.

Homodimer.

Its function is as follows. Controls the expression of genes used for utilizing diverse lipids as energy sources. This Mycolicibacterium smegmatis (strain ATCC 700084 / mc(2)155) (Mycobacterium smegmatis) protein is HTH-type transcriptional repressor KstR (kstR).